A 123-amino-acid polypeptide reads, in one-letter code: uncharacterized protein (123 aa).

The chain crosses the membrane as a helical span at residues 5–25 (GTLVIIFAIVLILCIMLLFFY). The interval 32-53 (KSGVLPPPIPPPTPPPPKKKYD) is disordered. A compositionally biased stretch (pro residues) spans 36 to 47 (LPPPIPPPTPPP).

This sequence belongs to the asfivirus CP123L family.

It is found in the host membrane. The protein localises to the virion. This is an uncharacterized protein from Ornithodoros (relapsing fever ticks).